Consider the following 260-residue polypeptide: Acetylglutamate kinase (260 aa).

Substrate-binding positions include 46–47, Arg68, and Asn160; that span reads GG.

It belongs to the acetylglutamate kinase family. ArgB subfamily.

It localises to the cytoplasm. It carries out the reaction N-acetyl-L-glutamate + ATP = N-acetyl-L-glutamyl 5-phosphate + ADP. It participates in amino-acid biosynthesis; L-arginine biosynthesis; N(2)-acetyl-L-ornithine from L-glutamate: step 2/4. Catalyzes the ATP-dependent phosphorylation of N-acetyl-L-glutamate. The chain is Acetylglutamate kinase from Shewanella sp. (strain MR-4).